Reading from the N-terminus, the 512-residue chain is NAD-dependent deacetylase sir2A (512 aa).

The UBP-type zinc-finger motif lies at 7 to 110; that stretch reads IECIHLKDEY…EILENIKSSN (104 aa). Cys-9, His-11, Cys-34, Cys-37, Cys-46, Cys-49, Cys-54, His-61, His-65, His-71, Cys-84, and Cys-87 together coordinate Zn(2+). Positions 113–122 are enriched in basic and acidic residues; it reads DKIVPKKDQK. Positions 113 to 196 are disordered; sequence DKIVPKKDQK…DESSSEGEES (84 aa). A compositionally biased stretch (low complexity) spans 130 to 175; sequence VVPSASITTSSTTTSISKQTTVNNTTTTSSSSTTTTTTTTSTTINN. Positions 176-195 are enriched in acidic residues; that stretch reads NEEEEESESETDESSSEGEE. The Deacetylase sirtuin-type domain maps to 231–503; it reads CVLKKPTIEE…LDLIKLLGWE (273 aa). Catalysis depends on His-361, which acts as the Proton acceptor. Residues Cys-369, Cys-372, Cys-393, and Cys-399 each contribute to the Zn(2+) site.

Belongs to the sirtuin family. Requires Zn(2+) as cofactor.

It catalyses the reaction N(6)-acetyl-L-lysyl-[protein] + NAD(+) + H2O = 2''-O-acetyl-ADP-D-ribose + nicotinamide + L-lysyl-[protein]. Functionally, NAD-dependent deacetylase, which plays an important role in the regulation of transcriptional repression. This chain is NAD-dependent deacetylase sir2A (sir2A), found in Dictyostelium discoideum (Social amoeba).